A 116-amino-acid polypeptide reads, in one-letter code: DNA-directed RNA polymerase subunit omega (116 aa).

Belongs to the RNA polymerase subunit omega family. As to quaternary structure, the RNAP catalytic core consists of 2 alpha, 1 beta, 1 beta' and 1 omega subunit. When a sigma factor is associated with the core the holoenzyme is formed, which can initiate transcription.

The catalysed reaction is RNA(n) + a ribonucleoside 5'-triphosphate = RNA(n+1) + diphosphate. Its function is as follows. Promotes RNA polymerase assembly. Latches the N- and C-terminal regions of the beta' subunit thereby facilitating its interaction with the beta and alpha subunits. This chain is DNA-directed RNA polymerase subunit omega, found in Hyphomonas neptunium (strain ATCC 15444).